The sequence spans 312 residues: Acetylglutamate kinase (312 aa).

Substrate contacts are provided by residues 74 to 75, R96, and N195; that span reads GG.

The protein belongs to the acetylglutamate kinase family. ArgB subfamily.

The protein resides in the cytoplasm. The catalysed reaction is N-acetyl-L-glutamate + ATP = N-acetyl-L-glutamyl 5-phosphate + ADP. The protein operates within amino-acid biosynthesis; L-arginine biosynthesis; N(2)-acetyl-L-ornithine from L-glutamate: step 2/4. In terms of biological role, catalyzes the ATP-dependent phosphorylation of N-acetyl-L-glutamate. The polypeptide is Acetylglutamate kinase (Nocardioides sp. (strain ATCC BAA-499 / JS614)).